Here is an 858-residue protein sequence, read N- to C-terminus: Heat shock protein 105 kDa (858 aa).

The residue at position 2 (S2) is an N-acetylserine. The residue at position 471 (K471) is an N6-acetyllysine. 2 disordered regions span residues 500-585 and 801-858; these read KVPT…PPEA and VNQP…MDLD. Residues 504-515 show a composition bias toward acidic residues; it reads EEDDGSSVEADM. Phosphoserine occurs at positions 509 and 510. The span at 533-549 shows a compositional bias: polar residues; it reads QQDNSEAGTQPQVQTDG. S558 carries the post-translational modification Phosphoserine. Composition is skewed to basic and acidic residues over residues 564-585 and 806-815; these read EENK…PPEA and PKIESPKLER. S810 is subject to Phosphoserine. At T816 the chain carries Phosphothreonine. Residues 822–834 show a composition bias toward basic and acidic residues; it reads LDKKEDLEGKDNF.

It belongs to the heat shock protein 70 family. In terms of assembly, interacts with HSPA8/HSC70. Interacts with HSPA1A (via NBD) and HSPA1B (via NBD). Post-translationally, phosphorylation on Ser-509 may be important for regulation of the HSPA8/HSC70 chaperone activity. Predominantly expressed in the brain and also found in the liver.

Its subcellular location is the cytoplasm. Acts as a nucleotide-exchange factor (NEF) for chaperone proteins HSPA1A and HSPA1B, promoting the release of ADP from HSPA1A/B thereby triggering substrate release. Prevents the aggregation of denatured proteins in cells under severe stress, on which the ATP levels decrease markedly. Inhibits HSPA8/HSC70 ATPase and chaperone activities. The sequence is that of Heat shock protein 105 kDa (HSPH1) from Cricetulus griseus (Chinese hamster).